The following is a 100-amino-acid chain: Integration host factor subunit alpha (100 aa).

Belongs to the bacterial histone-like protein family. In terms of assembly, heterodimer of an alpha and a beta chain.

Functionally, this protein is one of the two subunits of integration host factor, a specific DNA-binding protein that functions in genetic recombination as well as in transcriptional and translational control. The polypeptide is Integration host factor subunit alpha (Caulobacter sp. (strain K31)).